A 202-amino-acid chain; its full sequence is MTVFVFAFYLFAVVAVVAGLMVVLSKNPVHAVLWLILTFLSAAGLFVLMGAEFVAMLLIIVYVGAVAVLFLFVVMMLDIDFAALRGQLVRYAPVGGLIALVMLAQLATGLMVWNTADAANGLRAAPAPEGVENTAALGMILYDRYLYLFQGAGLVLLVAMIGAILLTLRHRTDIKRQNVLAQMHRDPAKALEMVDVKPGQGL.

Helical transmembrane passes span 3-23, 31-51, 53-73, 93-113, and 146-166; these read VFVFAFYLFAVVAVVAGLMVV, AVLWLILTFLSAAGLFVLMGA, FVAMLLIIVYVGAVAVLFLFV, PVGGLIALVMLAQLATGLMVW, and LYLFQGAGLVLLVAMIGAILL.

The protein belongs to the complex I subunit 6 family. In terms of assembly, NDH-1 is composed of 14 different subunits. Subunits NuoA, H, J, K, L, M, N constitute the membrane sector of the complex.

Its subcellular location is the cellular chromatophore membrane. The catalysed reaction is a quinone + NADH + 5 H(+)(in) = a quinol + NAD(+) + 4 H(+)(out). Its function is as follows. NDH-1 shuttles electrons from NADH, via FMN and iron-sulfur (Fe-S) centers, to quinones in the respiratory chain. The immediate electron acceptor for the enzyme in this species is believed to be ubiquinone. Couples the redox reaction to proton translocation (for every two electrons transferred, four hydrogen ions are translocated across the cytoplasmic membrane), and thus conserves the redox energy in a proton gradient. In Rhodobacter capsulatus (Rhodopseudomonas capsulata), this protein is NADH-quinone oxidoreductase subunit J (nuoJ).